The sequence spans 379 residues: Protein RecA (379 aa).

Residues 1–14 are compositionally biased toward low complexity; sequence MSNEIKSISSSNSS. A disordered region spans residues 1 to 24; sequence MSNEIKSISSSNSSCPPNEARSGE. ATP is bound at residue 84–91; that stretch reads GPESSGKT.

This sequence belongs to the RecA family.

The protein resides in the cytoplasm. Its function is as follows. Can catalyze the hydrolysis of ATP in the presence of single-stranded DNA, the ATP-dependent uptake of single-stranded DNA by duplex DNA, and the ATP-dependent hybridization of homologous single-stranded DNAs. It interacts with LexA causing its activation and leading to its autocatalytic cleavage. This is Protein RecA from Prochlorococcus marinus (strain SARG / CCMP1375 / SS120).